Reading from the N-terminus, the 133-residue chain is Large ribosomal subunit protein uL22c (133 aa).

It belongs to the universal ribosomal protein uL22 family. In terms of assembly, part of the 50S ribosomal subunit.

It localises to the plastid. Its subcellular location is the chloroplast. Its function is as follows. This protein binds specifically to 23S rRNA. Functionally, the globular domain of the protein is located near the polypeptide exit tunnel on the outside of the subunit, while an extended beta-hairpin is found that lines the wall of the exit tunnel in the center of the 70S ribosome. The sequence is that of Large ribosomal subunit protein uL22c (rpl22) from Manihot esculenta (Cassava).